The chain runs to 136 residues: Large ribosomal subunit protein uL16 (136 aa).

Belongs to the universal ribosomal protein uL16 family. In terms of assembly, part of the 50S ribosomal subunit.

Its function is as follows. Binds 23S rRNA and is also seen to make contacts with the A and possibly P site tRNAs. The polypeptide is Large ribosomal subunit protein uL16 (Pasteurella multocida (strain Pm70)).